A 66-amino-acid polypeptide reads, in one-letter code: Stress-induced protein KIN2 (66 aa).

A compositionally biased stretch (polar residues) spans 1–10 (MSETNKNAFQ). The tract at residues 1-20 (MSETNKNAFQAGQAAGKAEE) is disordered. 2 repeats span residues 31 to 35 (DAAAA) and 49 to 53 (DAAVG).

As to quaternary structure, interacts with DEK3. In terms of tissue distribution, expressed at high levels in embryos and mature seeds.

The chain is Stress-induced protein KIN2 from Arabidopsis thaliana (Mouse-ear cress).